The sequence spans 402 residues: Type II NADH:quinone oxidoreductase (402 aa).

FAD contacts are provided by residues 12-16, 39-40, and valine 83; these read GAGYA and NK. Residue glutamate 172 is part of the active site. FAD is bound by residues aspartate 302, 319–320, and lysine 379; that span reads AQ.

It belongs to the NADH dehydrogenase family. FAD serves as cofactor.

The protein resides in the cell membrane. The catalysed reaction is a quinone + NADH + H(+) = a quinol + NAD(+). Functionally, alternative, nonproton pumping NADH:quinone oxidoreductase that delivers electrons to the respiratory chain by oxidation of NADH and reduction of quinones, and contributes to the regeneration of NAD(+). The chain is Type II NADH:quinone oxidoreductase from Staphylococcus haemolyticus (strain JCSC1435).